The primary structure comprises 192 residues: MITISDAAQAHFVKLLADQPEGTHIRVFVISPGTAQAECGVSYCPPDAVESDDIELEFNGFNAMVDEKSAPFLEEATIDFVTDQLGSQLTLKAPNAKMRKVSGDAPLVERIEYVIQSEINPQLASHGGNIMLVEITSEGVAVLQFGGGCNGCSQVDITLKDGIEKQLLDMFPGELTGVRDVTDHQHGEHSYA.

The [4Fe-4S] cluster site is built by Cys149 and Cys152.

This sequence belongs to the NfuA family. As to quaternary structure, homodimer. [4Fe-4S] cluster serves as cofactor.

Involved in iron-sulfur cluster biogenesis. Binds a 4Fe-4S cluster, can transfer this cluster to apoproteins, and thereby intervenes in the maturation of Fe/S proteins. Could also act as a scaffold/chaperone for damaged Fe/S proteins. The chain is Fe/S biogenesis protein NfuA from Shewanella putrefaciens (strain CN-32 / ATCC BAA-453).